Here is a 609-residue protein sequence, read N- to C-terminus: Proteasome-associated ATPase (609 aa).

The interval M1–A24 is disordered. The stretch at S19–Q96 forms a coiled coil. G296–L301 lines the ATP pocket. The tract at residues Y608–L609 is docks into pockets in the proteasome alpha-ring.

It belongs to the AAA ATPase family. Homohexamer. Assembles into a hexameric ring structure that caps the 20S proteasome core. Strongly interacts with the prokaryotic ubiquitin-like protein Pup through a hydrophobic interface; the interacting region of ARC lies in its N-terminal coiled-coil domain. There is one Pup binding site per ARC hexamer ring. Upon ATP-binding, the C-terminus of ARC interacts with the alpha-rings of the proteasome core, possibly by binding to the intersubunit pockets.

The protein operates within protein degradation; proteasomal Pup-dependent pathway. ATPase which is responsible for recognizing, binding, unfolding and translocation of pupylated proteins into the bacterial 20S proteasome core particle. May be essential for opening the gate of the 20S proteasome via an interaction with its C-terminus, thereby allowing substrate entry and access to the site of proteolysis. Thus, the C-termini of the proteasomal ATPase may function like a 'key in a lock' to induce gate opening and therefore regulate proteolysis. In Mycobacterium ulcerans (strain Agy99), this protein is Proteasome-associated ATPase.